A 379-amino-acid polypeptide reads, in one-letter code: 8-amino-7-oxononanoate synthase (379 aa).

2 residues coordinate substrate: Arg27 and Arg34. Position 114–115 (114–115) interacts with pyridoxal 5'-phosphate; it reads GY. Residue His139 participates in substrate binding. Residues Ser187, 212–215, and 232–235 each bind pyridoxal 5'-phosphate; these read DDAH and TLSK. Lys235 carries the post-translational modification N6-(pyridoxal phosphate)lysine. Position 344 (Thr344) interacts with substrate.

It belongs to the class-II pyridoxal-phosphate-dependent aminotransferase family. BioF subfamily. Homodimer. The cofactor is pyridoxal 5'-phosphate.

The enzyme catalyses 6-carboxyhexanoyl-[ACP] + L-alanine + H(+) = (8S)-8-amino-7-oxononanoate + holo-[ACP] + CO2. The protein operates within cofactor biosynthesis; biotin biosynthesis. Catalyzes the decarboxylative condensation of pimeloyl-[acyl-carrier protein] and L-alanine to produce 8-amino-7-oxononanoate (AON), [acyl-carrier protein], and carbon dioxide. This is 8-amino-7-oxononanoate synthase from Methylobacterium nodulans (strain LMG 21967 / CNCM I-2342 / ORS 2060).